Reading from the N-terminus, the 714-residue chain is ATP-dependent zinc metalloprotease FtsH (714 aa).

Residues Met-1–Gln-75 lie on the Cytoplasmic side of the membrane. A helical transmembrane segment spans residues Phe-76 to Val-96. Over Ser-97–Leu-188 the chain is Periplasmic. Residues Ser-189 to Ile-209 traverse the membrane as a helical segment. Residues Lys-210–Thr-714 are Cytoplasmic-facing. Gly-280 to Thr-287 is a binding site for ATP. Zn(2+) is bound at residue His-502. The active site involves Glu-503. Positions 506 and 579 each coordinate Zn(2+). Residues Pro-688–Thr-714 are disordered. Residues Glu-699 to Thr-714 show a composition bias toward polar residues.

This sequence in the central section; belongs to the AAA ATPase family. The protein in the C-terminal section; belongs to the peptidase M41 family. In terms of assembly, homohexamer. Zn(2+) is required as a cofactor.

The protein resides in the cell inner membrane. Functionally, acts as a processive, ATP-dependent zinc metallopeptidase for both cytoplasmic and membrane proteins. Plays a role in the quality control of integral membrane proteins. The polypeptide is ATP-dependent zinc metalloprotease FtsH (Ralstonia pickettii (strain 12J)).